A 443-amino-acid polypeptide reads, in one-letter code: Amino-acid acetyltransferase (443 aa).

Residues 296–443 form the N-acetyltransferase domain; the sequence is EQIRRATIND…RSKVLMADLG (148 aa).

Belongs to the acetyltransferase family. ArgA subfamily. In terms of assembly, homohexamer.

The protein resides in the cytoplasm. The enzyme catalyses L-glutamate + acetyl-CoA = N-acetyl-L-glutamate + CoA + H(+). It participates in amino-acid biosynthesis; L-arginine biosynthesis; N(2)-acetyl-L-ornithine from L-glutamate: step 1/4. The polypeptide is Amino-acid acetyltransferase (argA) (Salmonella typhi).